The following is a 1075-amino-acid chain: Error-prone DNA polymerase (1075 aa).

It belongs to the DNA polymerase type-C family. DnaE2 subfamily.

It is found in the cytoplasm. The catalysed reaction is DNA(n) + a 2'-deoxyribonucleoside 5'-triphosphate = DNA(n+1) + diphosphate. DNA polymerase involved in damage-induced mutagenesis and translesion synthesis (TLS). It is not the major replicative DNA polymerase. The protein is Error-prone DNA polymerase of Ralstonia nicotianae (strain ATCC BAA-1114 / GMI1000) (Ralstonia solanacearum).